We begin with the raw amino-acid sequence, 266 residues long: uncharacterized protein (266 aa).

The next 7 helical transmembrane spans lie at 25–45, 64–84, 111–131, 158–178, 186–206, 209–229, and 230–250; these read LPSLLVLGFLGGAFIALGYLL, IGAAVFPVGLILVVLAGAELI, IVTIMNLIGALFVAYFFGHLV, VLISAIGCNWLVCLAVWLSFG, ILGIWFPIMAFVAIGFQHVVA, FVIPAAIFAGSFTWGQFIGNI, and IPAFIGNVIGGAVFVGLIYFI.

The protein belongs to the FNT transporter (TC 1.A.16) family.

The protein localises to the cell membrane. This is an uncharacterized protein from Bacillus subtilis (strain 168).